Reading from the N-terminus, the 47-residue chain is MSNSQAPMQAVEVRVYPIFTIRWLAVHALAIPSVFFLGAIAAMQFLR.

The chain crosses the membrane as a helical span at residues 23–39 (WLAVHALAIPSVFFLGA). Histidine 27 is a binding site for heme.

The protein belongs to the PsbE/PsbF family. As to quaternary structure, heterodimer of an alpha subunit and a beta subunit. PSII is composed of 1 copy each of membrane proteins PsbA, PsbB, PsbC, PsbD, PsbE, PsbF, PsbH, PsbI, PsbJ, PsbK, PsbL, PsbM, PsbT, PsbX, PsbY, Psb30/Ycf12, peripheral proteins PsbO, CyanoQ (PsbQ), PsbU, PsbV and a large number of cofactors. It forms dimeric complexes. Heme b is required as a cofactor.

It localises to the cellular thylakoid membrane. Its function is as follows. This b-type cytochrome is tightly associated with the reaction center of photosystem II (PSII). PSII is a light-driven water:plastoquinone oxidoreductase that uses light energy to abstract electrons from H(2)O, generating O(2) and a proton gradient subsequently used for ATP formation. It consists of a core antenna complex that captures photons, and an electron transfer chain that converts photonic excitation into a charge separation. This Prochlorococcus marinus subsp. pastoris (strain CCMP1986 / NIES-2087 / MED4) protein is Cytochrome b559 subunit beta.